The sequence spans 416 residues: Tyrosine--tRNA ligase (416 aa).

Y37 contributes to the L-tyrosine binding site. Residues 42 to 51 carry the 'HIGH' region motif; it reads PTADSLHVGN. L-tyrosine-binding residues include Y176 and Q180. A 'KMSKS' region motif is present at residues 236–240; sequence KMGKS. Residue K239 participates in ATP binding. One can recognise an S4 RNA-binding domain in the interval 350–416; that stretch reads LPAFRVFQEA…KKKHILLRPV (67 aa).

The protein belongs to the class-I aminoacyl-tRNA synthetase family. TyrS type 1 subfamily. In terms of assembly, homodimer.

Its subcellular location is the cytoplasm. The enzyme catalyses tRNA(Tyr) + L-tyrosine + ATP = L-tyrosyl-tRNA(Tyr) + AMP + diphosphate + H(+). Its function is as follows. Catalyzes the attachment of tyrosine to tRNA(Tyr) in a two-step reaction: tyrosine is first activated by ATP to form Tyr-AMP and then transferred to the acceptor end of tRNA(Tyr). The polypeptide is Tyrosine--tRNA ligase (Gluconobacter oxydans (strain 621H) (Gluconobacter suboxydans)).